Consider the following 274-residue polypeptide: NH(3)-dependent NAD(+) synthetase (274 aa).

46–53 lines the ATP pocket; it reads GISGGQDS. Aspartate 52 is a binding site for Mg(2+). Arginine 140 serves as a coordination point for deamido-NAD(+). Threonine 160 contributes to the ATP binding site. Residue glutamate 165 participates in Mg(2+) binding. Deamido-NAD(+) is bound by residues lysine 173 and aspartate 180. Residues lysine 189 and threonine 211 each coordinate ATP. Residue 260–261 coordinates deamido-NAD(+); sequence HK.

It belongs to the NAD synthetase family. In terms of assembly, homodimer.

The catalysed reaction is deamido-NAD(+) + NH4(+) + ATP = AMP + diphosphate + NAD(+) + H(+). The protein operates within cofactor biosynthesis; NAD(+) biosynthesis; NAD(+) from deamido-NAD(+) (ammonia route): step 1/1. Catalyzes the ATP-dependent amidation of deamido-NAD to form NAD. Uses ammonia as a nitrogen source. This chain is NH(3)-dependent NAD(+) synthetase, found in Streptococcus equi subsp. equi (strain 4047).